The sequence spans 240 residues: PF03932 family protein CutC (240 aa).

The protein belongs to the CutC family.

The protein resides in the cytoplasm. In Xanthomonas campestris pv. campestris (strain 8004), this protein is PF03932 family protein CutC.